The following is a 138-amino-acid chain: Holo-[acyl-carrier-protein] synthase (138 aa).

2 residues coordinate Mg(2+): Asp-8 and Glu-57.

The protein belongs to the P-Pant transferase superfamily. AcpS family. Mg(2+) is required as a cofactor.

Its subcellular location is the cytoplasm. The enzyme catalyses apo-[ACP] + CoA = holo-[ACP] + adenosine 3',5'-bisphosphate + H(+). In terms of biological role, transfers the 4'-phosphopantetheine moiety from coenzyme A to a Ser of acyl-carrier-protein. This Phenylobacterium zucineum (strain HLK1) protein is Holo-[acyl-carrier-protein] synthase.